Reading from the N-terminus, the 67-residue chain is DNA-directed RNA polymerase subunit omega (67 aa).

It belongs to the RNA polymerase subunit omega family. The RNAP catalytic core consists of 2 alpha, 1 beta, 1 beta' and 1 omega subunit. When a sigma factor is associated with the core the holoenzyme is formed, which can initiate transcription.

It catalyses the reaction RNA(n) + a ribonucleoside 5'-triphosphate = RNA(n+1) + diphosphate. Functionally, promotes RNA polymerase assembly. Latches the N- and C-terminal regions of the beta' subunit thereby facilitating its interaction with the beta and alpha subunits. The polypeptide is DNA-directed RNA polymerase subunit omega (Bordetella pertussis (strain Tohama I / ATCC BAA-589 / NCTC 13251)).